The following is a 285-amino-acid chain: Urease accessory protein UreD 1 (285 aa).

It belongs to the UreD family. In terms of assembly, ureD, UreF and UreG form a complex that acts as a GTP-hydrolysis-dependent molecular chaperone, activating the urease apoprotein by helping to assemble the nickel containing metallocenter of UreC. The UreE protein probably delivers the nickel.

It is found in the cytoplasm. Its function is as follows. Required for maturation of urease via the functional incorporation of the urease nickel metallocenter. The chain is Urease accessory protein UreD 1 from Pseudomonas syringae pv. syringae (strain B728a).